Reading from the N-terminus, the 40-residue chain is Fibrinolytic protease (40 aa).

Residues 1–40 enclose the Peptidase S1 domain; the sequence is IVGGNEVTPHAYPWQVGLFIDDMYFCGGSISVTLTGWGKP.

The protein belongs to the peptidase S1 family.

It is found in the secreted. The protein resides in the extracellular space. Serine protease with fibrinolytic activity. The protein is Fibrinolytic protease of Euphausia superba (Antarctic krill).